We begin with the raw amino-acid sequence, 593 residues long: SPI-1 type 3 secretion system translocon protein SctE (593 aa).

Coiled-coil stretches lie at residues D151 to A208 and E287 to M314. A run of 2 helical transmembrane segments spans residues V330–V350 and I409–V429.

Belongs to the SctE/SipB/YopB family. In terms of assembly, the core secretion machinery of the T3SS is composed of approximately 20 different proteins, including cytoplasmic components, a base, an export apparatus and a needle. This subunit is involved in the formation of a pore, called the translocon, in host membrane.

The protein localises to the secreted. It localises to the host membrane. Its function is as follows. Component of the type III secretion system 1 (SPI-1 T3SS), also called injectisome, which is used to inject bacterial effector proteins into eukaryotic host cells. SipB/SctE1 and SipC/SctB are inserted into the host membrane where they form a pore and allow the translocation of effector proteins into the cytosol of target cells. The protein is SPI-1 type 3 secretion system translocon protein SctE of Salmonella dublin.